The primary structure comprises 94 residues: Non-specific lipid-transfer protein 1 (94 aa).

4 disulfide bridges follow: C4–C53, C14–C30, C31–C76, and C51–C90.

Plant non-specific lipid-transfer proteins transfer phospholipids as well as galactolipids across membranes. May play a role in wax or cutin deposition in the cell walls of expanding epidermal cells and certain secretory tissues. The chain is Non-specific lipid-transfer protein 1 from Amaranthus hypochondriacus (Prince-of-Wales feather).